The primary structure comprises 505 residues: Alpha-1-syntrophin (505 aa).

2 disordered regions span residues 1–24 (MASG…AGAG) and 40–75 (LTVS…AAPP). 2 consecutive PH domains span residues 6–269 (RAPR…AQIN) and 293–401 (DIKQ…DGCH). Low complexity predominate over residues 9–18 (RTGLLELRAG). The PDZ domain maps to 87–170 (RVTVRKADAG…EVVLEVKYMK (84 aa)). Residues S101, S184, S189, S193, and S200 each carry the phosphoserine modification. A disordered region spans residues 183-212 (TSVGWDSPPASPLQRQPSSPGPQTRNLSEA). Over residues 195–209 (LQRQPSSPGPQTRNL) the composition is skewed to polar residues. One can recognise an SU domain in the interval 449–505 (PFEKLQMSSDDGASLLFLDFGGAEGEIQLDLHSCPKTMVFIIHSFLSAKVTRLGLLA). The calmodulin-binding stretch occupies residues 483–505 (PKTMVFIIHSFLSAKVTRLGLLA).

Belongs to the syntrophin family. In terms of assembly, monomer and homodimer. Interacts with the dystrophin related protein DTNA; SGCG of the dystrophin glycoprotein complex; NOS1; GRB2; GA; TGFA; MAPK12 and the sodium channel proteins SCN4A and SCN5A. Interacts with the dystrophin protein DMD in a calmodulin dependent manner and with related protein UTRN; SGCA of the dystrophin glycoprotein complex; F-actin; calmodulin and with the other members of the syntrophin family SNTB1 and SNTB2. Interacts with MYOC; regulates muscle hypertrophy. Interacts with DTNB. Phosphorylated by CaM-kinase II. Phosphorylation may inhibit the interaction with DMD. In terms of tissue distribution, highly expressed in skeletal and cardiac muscle and is also detected in brain.

Its subcellular location is the cell membrane. The protein resides in the sarcolemma. The protein localises to the cell junction. It is found in the cytoplasm. It localises to the cytoskeleton. Adapter protein that binds to and probably organizes the subcellular localization of a variety of membrane proteins. May link various receptors to the actin cytoskeleton and the extracellular matrix via dystrophin glycoprotein complex. Plays an important role in synapse formation and in the organization of UTRN and acetylcholine receptors at the neuromuscular synapse. Binds to phosphatidylinositol 4,5-bisphosphate. The polypeptide is Alpha-1-syntrophin (SNTA1) (Oryctolagus cuniculus (Rabbit)).